The sequence spans 585 residues: A-type ATP synthase subunit A (585 aa).

ATP is bound at residue 231-238 (GPFGSGKT).

This sequence belongs to the ATPase alpha/beta chains family. Has multiple subunits with at least A(3), B(3), C, D, E, F, H, I and proteolipid K(x).

The protein localises to the cell membrane. It catalyses the reaction ATP + H2O + 4 H(+)(in) = ADP + phosphate + 5 H(+)(out). Functionally, produces ATP from ADP in the presence of a proton gradient across the membrane. The archaeal alpha chain is a catalytic subunit. Component of the A-type ATP synthase that produces ATP from ADP in the presence of a proton gradient across the membrane. The A chain is the catalytic subunit. This Thermococcus sp. (strain KI) protein is A-type ATP synthase subunit A.